Reading from the N-terminus, the 163-residue chain is Transcription antitermination protein NusB (163 aa).

It belongs to the NusB family.

Its function is as follows. Involved in transcription antitermination. Required for transcription of ribosomal RNA (rRNA) genes. Binds specifically to the boxA antiterminator sequence of the ribosomal RNA (rrn) operons. In Granulibacter bethesdensis (strain ATCC BAA-1260 / CGDNIH1), this protein is Transcription antitermination protein NusB.